The chain runs to 43 residues: Protein PsbN (43 aa).

The helical transmembrane segment at Leu-7–Phe-27 threads the bilayer.

This sequence belongs to the PsbN family.

The protein localises to the cellular thylakoid membrane. Functionally, may play a role in photosystem I and II biogenesis. The chain is Protein PsbN from Synechococcus sp. (strain JA-3-3Ab) (Cyanobacteria bacterium Yellowstone A-Prime).